The following is a 974-amino-acid chain: Hexokinase-1 (974 aa).

Positions 1–42 (MGWGAPLLSRMLHGPGQAGETSPVPERQSGSENPASEDRRPL) are disordered. Positions 57-66 (CQRGQAVDVE) are mitochondrial-binding peptide (MBP). Hexokinase domains follow at residues 72-514 (PLTE…MVTA) and 520-962 (AEQH…LITA). ATP contacts are provided by residues Arg86 and 140 to 145 (DLGGSS). The interval 129-263 (DGSEKGDFIA…DYDANIVAVV (135 aa)) is hexokinase small subdomain 1. Residue 140–147 (DLGGSSFR) coordinates D-glucose 6-phosphate. D-glucose contacts are provided by residues Ser211, 228 to 229 (TK), and 264 to 265 (ND). The hexokinase large subdomain 1 stretch occupies residues 264–503 (NDTVGTMMTC…SDVRFLLSES (240 aa)). D-glucose 6-phosphate contacts are provided by Asp265 and Thr288. D-glucose-binding positions include Asn291, Glu316, and 347–350 (QLFE). Residue Ser393 is modified to Phosphoserine. 469–471 (DGS) contacts D-glucose 6-phosphate. 481 to 482 (RR) contributes to the ATP binding site. Residues Ser505 and 588–592 (DLGGT) contribute to the D-glucose 6-phosphate site. The hexokinase small subdomain 2 stretch occupies residues 577–711 (DGTEHGDFLA…EFDLDVVAVV (135 aa)). 588–593 (DLGGTN) contributes to the ATP binding site. D-glucose contacts are provided by residues 659-660 (SF), 676-677 (TK), and 712-713 (ND). The segment at 712 to 951 (NDTVGTMMTC…CTVSFLLSED (240 aa)) is hexokinase large subdomain 2. 2 residues coordinate D-glucose 6-phosphate: Asp713 and Thr736. Residue Thr736 coordinates ATP. Residues 738–739 (SN), Glu764, and Glu798 contribute to the D-glucose site. Residues 803-804 (GM), 840-844 (TKFLS), and 919-923 (TLYKL) each bind ATP. D-glucose 6-phosphate is bound by residues 917 to 919 (DGT) and Ser953.

This sequence belongs to the hexokinase family. As to quaternary structure, monomer. Interacts with RABL2/RABL2A; binds preferentially to GTP-bound RABL2. Interacts with VDAC1. The HK1-VDAC1 complex interacts with ATF2. Interacts (via N-terminal spermatogenic cell-specific region) with PFKM isoform 2 and isoform 3 (via C-terminus). Interacts with SMAD5. In terms of processing, tyrosine-phosphorylated. In rapidly growing tumor cells exhibiting high glucose catabolic rates, isoform HK1 is markedly elevated. Isoform HK1-SA, isoform HK1-SB and isoform HK1-SC are found only in spermatogenic cells. Isoform HK1-SC is detected in round spermatids, condensing spermatids and mature sperm where it is found in the head membranes, mitochondria of the midpiece and the fibrous sheath of the flagellum. Expressed within the principal piece and midpiece of sperm tail (at protein level).

It localises to the mitochondrion outer membrane. The protein localises to the cytoplasm. Its subcellular location is the cytosol. The protein resides in the membrane. The catalysed reaction is a D-hexose + ATP = a D-hexose 6-phosphate + ADP + H(+). It carries out the reaction D-fructose + ATP = D-fructose 6-phosphate + ADP + H(+). The enzyme catalyses D-glucose + ATP = D-glucose 6-phosphate + ADP + H(+). It catalyses the reaction D-mannose + ATP = D-mannose 6-phosphate + ADP + H(+). The catalysed reaction is D-glucosamine + ATP = D-glucosamine 6-phosphate + ADP + H(+). The protein operates within carbohydrate metabolism; hexose metabolism. It functions in the pathway carbohydrate degradation; glycolysis; D-glyceraldehyde 3-phosphate and glycerone phosphate from D-glucose: step 1/4. Hexokinase is an allosteric enzyme inhibited by its product D-glucose 6-phosphate. Hexokinase activity is inhibited by N-acetyl-D-glucosamine. In terms of biological role, catalyzes the phosphorylation of various hexoses, such as D-glucose, D-glucosamine, D-fructose, D-mannose and 2-deoxy-D-glucose, to hexose 6-phosphate (D-glucose 6-phosphate, D-glucosamine 6-phosphate, D-fructose 6-phosphate, D-mannose 6-phosphate and 2-deoxy-D-glucose 6-phosphate, respectively). Does not phosphorylate N-acetyl-D-glucosamine. Mediates the initial step of glycolysis by catalyzing phosphorylation of D-glucose to D-glucose 6-phosphate. Involved in innate immunity and inflammation by acting as a pattern recognition receptor for bacterial peptidoglycan. When released in the cytosol, N-acetyl-D-glucosamine component of bacterial peptidoglycan inhibits the hexokinase activity of HK1 and causes its dissociation from mitochondrial outer membrane, thereby activating the NLRP3 inflammasome. The chain is Hexokinase-1 from Mus musculus (Mouse).